A 125-amino-acid polypeptide reads, in one-letter code: Small ribosomal subunit protein uS12 (125 aa).

Aspartate 89 carries the 3-methylthioaspartic acid modification.

It belongs to the universal ribosomal protein uS12 family. Part of the 30S ribosomal subunit. Contacts proteins S8 and S17. May interact with IF1 in the 30S initiation complex.

Its function is as follows. With S4 and S5 plays an important role in translational accuracy. Functionally, interacts with and stabilizes bases of the 16S rRNA that are involved in tRNA selection in the A site and with the mRNA backbone. Located at the interface of the 30S and 50S subunits, it traverses the body of the 30S subunit contacting proteins on the other side and probably holding the rRNA structure together. The combined cluster of proteins S8, S12 and S17 appears to hold together the shoulder and platform of the 30S subunit. This chain is Small ribosomal subunit protein uS12, found in Cupriavidus necator (strain ATCC 17699 / DSM 428 / KCTC 22496 / NCIMB 10442 / H16 / Stanier 337) (Ralstonia eutropha).